The chain runs to 31 residues: Aspartate racemase (31 aa).

The interval 1–31 is disordered; the sequence is PVAPEYLFKKEEDKGANKEEEEVAPELGIRA. Residues 7–18 are compositionally biased toward basic and acidic residues; that stretch reads LFKKEEDKGANK.

The protein belongs to the aspartate/glutamate racemases family. Requires pyridoxal 5'-phosphate as cofactor.

It carries out the reaction L-aspartate = D-aspartate. With respect to regulation, inhibited by hydroxylamine, aminooxyacetate, phenylhydrazine and sodium borohydride. In terms of biological role, highly specific toward aspartate and entirely inactive on glutamate, alanine and serine. This Anadara broughtonii (Blood clam) protein is Aspartate racemase.